The primary structure comprises 191 residues: Transcription factor FapR (191 aa).

This sequence belongs to the FapR family.

Functionally, transcriptional factor involved in regulation of membrane lipid biosynthesis by repressing genes involved in fatty acid and phospholipid metabolism. The polypeptide is Transcription factor FapR (Oceanobacillus iheyensis (strain DSM 14371 / CIP 107618 / JCM 11309 / KCTC 3954 / HTE831)).